We begin with the raw amino-acid sequence, 109 residues long: Iron-sulfur cluster assembly protein CyaY (109 aa).

This sequence belongs to the frataxin family.

Functionally, involved in iron-sulfur (Fe-S) cluster assembly. May act as a regulator of Fe-S biogenesis. This is Iron-sulfur cluster assembly protein CyaY from Burkholderia lata (strain ATCC 17760 / DSM 23089 / LMG 22485 / NCIMB 9086 / R18194 / 383).